A 352-amino-acid polypeptide reads, in one-letter code: Heat-inducible transcription repressor HrcA (352 aa).

It belongs to the HrcA family.

Negative regulator of class I heat shock genes (grpE-dnaK-dnaJ and groELS operons). Prevents heat-shock induction of these operons. This Latilactobacillus sakei (Lactobacillus sakei) protein is Heat-inducible transcription repressor HrcA.